A 68-amino-acid chain; its full sequence is Large ribosomal subunit protein uL29 (68 aa).

Belongs to the universal ribosomal protein uL29 family.

The chain is Large ribosomal subunit protein uL29 from Chloroflexus aggregans (strain MD-66 / DSM 9485).